Consider the following 454-residue polypeptide: tRNA modification GTPase MnmE (454 aa).

Residues arginine 26, glutamate 84, and lysine 123 each coordinate (6S)-5-formyl-5,6,7,8-tetrahydrofolate. One can recognise a TrmE-type G domain in the interval 219 to 378 (GLQVVIAGKP…LVDAITAHAG (160 aa)). Asparagine 229 provides a ligand contact to K(+). GTP is bound by residues 229–234 (NAGKSS), 248–254 (TDIAGTT), and 273–276 (DTAG). Serine 233 is a Mg(2+) binding site. The K(+) site is built by threonine 248, isoleucine 250, and threonine 253. Threonine 254 is a Mg(2+) binding site. Lysine 454 serves as a coordination point for (6S)-5-formyl-5,6,7,8-tetrahydrofolate.

Belongs to the TRAFAC class TrmE-Era-EngA-EngB-Septin-like GTPase superfamily. TrmE GTPase family. Homodimer. Heterotetramer of two MnmE and two MnmG subunits. The cofactor is K(+).

It is found in the cytoplasm. Its function is as follows. Exhibits a very high intrinsic GTPase hydrolysis rate. Involved in the addition of a carboxymethylaminomethyl (cmnm) group at the wobble position (U34) of certain tRNAs, forming tRNA-cmnm(5)s(2)U34. This is tRNA modification GTPase MnmE from Acinetobacter baumannii (strain AYE).